Here is a 348-residue protein sequence, read N- to C-terminus: Anthranilate phosphoribosyltransferase (348 aa).

5-phospho-alpha-D-ribose 1-diphosphate-binding positions include Gly-91, 94 to 95 (GD), Thr-99, 101 to 104 (NIST), 119 to 127 (KHGNRSASG), and Ser-131. Gly-91 provides a ligand contact to anthranilate. Ser-103 contacts Mg(2+). Asn-122 serves as a coordination point for anthranilate. Residue Arg-177 participates in anthranilate binding. Asp-236 and Glu-237 together coordinate Mg(2+).

It belongs to the anthranilate phosphoribosyltransferase family. In terms of assembly, homodimer. Mg(2+) serves as cofactor.

The catalysed reaction is N-(5-phospho-beta-D-ribosyl)anthranilate + diphosphate = 5-phospho-alpha-D-ribose 1-diphosphate + anthranilate. Its pathway is amino-acid biosynthesis; L-tryptophan biosynthesis; L-tryptophan from chorismate: step 2/5. Its function is as follows. Catalyzes the transfer of the phosphoribosyl group of 5-phosphorylribose-1-pyrophosphate (PRPP) to anthranilate to yield N-(5'-phosphoribosyl)-anthranilate (PRA). The chain is Anthranilate phosphoribosyltransferase from Synechococcus sp. (strain ATCC 27144 / PCC 6301 / SAUG 1402/1) (Anacystis nidulans).